The primary structure comprises 375 residues: Actin, cytoplasmic (375 aa).

The protein belongs to the actin family.

It localises to the cytoplasm. It is found in the cytoskeleton. The catalysed reaction is ATP + H2O = ADP + phosphate + H(+). Actins are highly conserved proteins that are involved in various types of cell motility and are ubiquitously expressed in all eukaryotic cells. This chain is Actin, cytoplasmic (MIC-ACT-1), found in Sterkiella nova (Ciliate).